A 187-amino-acid chain; its full sequence is UPF0301 protein ETA_28320 (187 aa).

Belongs to the UPF0301 (AlgH) family.

The sequence is that of UPF0301 protein ETA_28320 from Erwinia tasmaniensis (strain DSM 17950 / CFBP 7177 / CIP 109463 / NCPPB 4357 / Et1/99).